The chain runs to 296 residues: Mycothiol acetyltransferase (296 aa).

N-acetyltransferase domains lie at 17 to 146 (YNHR…AVYD) and 156 to 296 (LKTA…VYEK). Glutamate 44 contributes to the 1D-myo-inositol 2-(L-cysteinylamino)-2-deoxy-alpha-D-glucopyranoside binding site. An acetyl-CoA-binding site is contributed by 81–83 (LAV). Positions 183, 222, and 230 each coordinate 1D-myo-inositol 2-(L-cysteinylamino)-2-deoxy-alpha-D-glucopyranoside. Acetyl-CoA is bound by residues 234–236 (VGL) and 241–247 (RGKGLGD). Position 268 (tyrosine 268) interacts with 1D-myo-inositol 2-(L-cysteinylamino)-2-deoxy-alpha-D-glucopyranoside.

This sequence belongs to the acetyltransferase family. MshD subfamily. As to quaternary structure, monomer.

It catalyses the reaction 1D-myo-inositol 2-(L-cysteinylamino)-2-deoxy-alpha-D-glucopyranoside + acetyl-CoA = mycothiol + CoA + H(+). In terms of biological role, catalyzes the transfer of acetyl from acetyl-CoA to desacetylmycothiol (Cys-GlcN-Ins) to form mycothiol. In Corynebacterium efficiens (strain DSM 44549 / YS-314 / AJ 12310 / JCM 11189 / NBRC 100395), this protein is Mycothiol acetyltransferase.